The chain runs to 374 residues: MNALFIIIFMIVVGAIIGGVTNVIAIRMLFHPFKPYYIFKFRVPFTPGLIPKRREEIATKIGQVIEEHLLTETLINEKLKSEQSQQAIESMIQQQLQKLTKDQLSIKQITSQIDIDLEQVLQTNGNQYIASQLNNYYTKHQNQTIASLLPNQLVTFLDQHVDNATDLLCDRARNYLSSAKGTQDINDMLDTFFNEKGKLIGMLQMFMTKESIADRIQQELIRLTSHPKARAIVTSLITNEYQTFKDKSLNKLLDTSQFNEIAENLSMYVTTYASKQANKPVVTLMPQFVDYLESQLSSKLANLIIEQLSIHLSTIMKKVDLRGLIEEQINTFDLDYIEKLIIEIANKELKLIMSLGFILGGIIGFFQGLVAIFV.

2 helical membrane passes run 4–24 (LFIIIFMIVVGAIIGGVTNVI) and 354–374 (SLGFILGGIIGFFQGLVAIFV).

This sequence belongs to the UPF0754 family.

Its subcellular location is the cell membrane. This chain is UPF0754 membrane protein SAR1937, found in Staphylococcus aureus (strain MRSA252).